The chain runs to 956 residues: Translation initiation factor IF-2 (956 aa).

3 disordered regions span residues 53-102 (QFAG…QQEI), 116-315 (GKID…NRPA), and 334-371 (TLEK…ALDE). Over residues 58 to 102 (KGNKEASKEVGEEKRKEKEALRVEREKEIEDKRRQEEERQKQQEI) the composition is skewed to basic and acidic residues. Positions 142–158 (VTPTQTEKPVQKETVQS) are enriched in polar residues. Over residues 166–186 (SEEKKVEKPIITEKKEVKAES) the composition is skewed to basic and acidic residues. Residues 197–208 (TDPTTAEETITT) are compositionally biased toward low complexity. A compositionally biased stretch (polar residues) spans 209-229 (QYQKLSGTTLTGQTIDLSQFN). The span at 240–257 (ITPNKPGTPGVGNNNNAN) shows a compositional bias: low complexity. Residues 343-352 (GKSKAAKYRR) are compositionally biased toward basic residues. Residues 353-371 (DKRETHRQKSDDEQRALDE) are compositionally biased toward basic and acidic residues. The 169-residue stretch at 454 to 622 (TRAPIVTVMG…KVLLEAEILD (169 aa)) folds into the tr-type G domain. Residues 463 to 470 (GHVDHGKT) are G1. 463–470 (GHVDHGKT) is a binding site for GTP. A G2 region spans residues 488–492 (GITQH). The interval 510 to 513 (DTPG) is G3. Residues 510–514 (DTPGH) and 564–567 (NKVD) contribute to the GTP site. A G4 region spans residues 564-567 (NKVD). The G5 stretch occupies residues 600–602 (SAK).

It belongs to the TRAFAC class translation factor GTPase superfamily. Classic translation factor GTPase family. IF-2 subfamily.

It localises to the cytoplasm. Its function is as follows. One of the essential components for the initiation of protein synthesis. Protects formylmethionyl-tRNA from spontaneous hydrolysis and promotes its binding to the 30S ribosomal subunits. Also involved in the hydrolysis of GTP during the formation of the 70S ribosomal complex. This is Translation initiation factor IF-2 from Flavobacterium johnsoniae (strain ATCC 17061 / DSM 2064 / JCM 8514 / BCRC 14874 / CCUG 350202 / NBRC 14942 / NCIMB 11054 / UW101) (Cytophaga johnsonae).